A 311-amino-acid chain; its full sequence is Probable deoxyhypusine synthase (311 aa).

Lysine 284 functions as the Nucleophile in the catalytic mechanism.

The protein belongs to the deoxyhypusine synthase family. Requires NAD(+) as cofactor.

The enzyme catalyses [eIF5A protein]-L-lysine + spermidine = [eIF5A protein]-deoxyhypusine + propane-1,3-diamine. It participates in protein modification; eIF5A hypusination. Catalyzes the NAD-dependent oxidative cleavage of spermidine and the subsequent transfer of the butylamine moiety of spermidine to the epsilon-amino group of a specific lysine residue of the eIF-5A precursor protein to form the intermediate deoxyhypusine residue. The sequence is that of Probable deoxyhypusine synthase from Picrophilus torridus (strain ATCC 700027 / DSM 9790 / JCM 10055 / NBRC 100828 / KAW 2/3).